A 536-amino-acid polypeptide reads, in one-letter code: CTP synthase (536 aa).

An amidoligase domain region spans residues 1–268 (MKSKFIFITG…GKVLCKLFNI (268 aa)). Serine 14 is a binding site for CTP. UTP is bound at residue serine 14. 15–20 (SLGKGL) provides a ligand contact to ATP. Tyrosine 55 contacts L-glutamine. Aspartate 72 serves as a coordination point for ATP. 2 residues coordinate Mg(2+): aspartate 72 and glutamate 142. CTP is bound by residues 149-151 (DIE), 189-194 (KTKPMQ), and lysine 225. UTP-binding positions include 189-194 (KTKPMQ) and lysine 225. The Glutamine amidotransferase type-1 domain occupies 293–535 (TIALVGKYVE…IKAAVDNKIN (243 aa)). Residue glycine 356 coordinates L-glutamine. The Nucleophile; for glutamine hydrolysis role is filled by cysteine 383. L-glutamine is bound by residues 384-387 (LGMQ), glutamate 407, and arginine 463. Catalysis depends on residues histidine 508 and glutamate 510.

Belongs to the CTP synthase family. As to quaternary structure, homotetramer.

It catalyses the reaction UTP + L-glutamine + ATP + H2O = CTP + L-glutamate + ADP + phosphate + 2 H(+). The enzyme catalyses L-glutamine + H2O = L-glutamate + NH4(+). It carries out the reaction UTP + NH4(+) + ATP = CTP + ADP + phosphate + 2 H(+). Its pathway is pyrimidine metabolism; CTP biosynthesis via de novo pathway; CTP from UDP: step 2/2. Allosterically activated by GTP, when glutamine is the substrate; GTP has no effect on the reaction when ammonia is the substrate. The allosteric effector GTP functions by stabilizing the protein conformation that binds the tetrahedral intermediate(s) formed during glutamine hydrolysis. Inhibited by the product CTP, via allosteric rather than competitive inhibition. In terms of biological role, catalyzes the ATP-dependent amination of UTP to CTP with either L-glutamine or ammonia as the source of nitrogen. Regulates intracellular CTP levels through interactions with the four ribonucleotide triphosphates. This chain is CTP synthase, found in Treponema denticola (strain ATCC 35405 / DSM 14222 / CIP 103919 / JCM 8153 / KCTC 15104).